The sequence spans 222 residues: Leucyl/phenylalanyl-tRNA--protein transferase (222 aa).

It belongs to the L/F-transferase family.

It localises to the cytoplasm. It carries out the reaction N-terminal L-lysyl-[protein] + L-leucyl-tRNA(Leu) = N-terminal L-leucyl-L-lysyl-[protein] + tRNA(Leu) + H(+). It catalyses the reaction N-terminal L-arginyl-[protein] + L-leucyl-tRNA(Leu) = N-terminal L-leucyl-L-arginyl-[protein] + tRNA(Leu) + H(+). The catalysed reaction is L-phenylalanyl-tRNA(Phe) + an N-terminal L-alpha-aminoacyl-[protein] = an N-terminal L-phenylalanyl-L-alpha-aminoacyl-[protein] + tRNA(Phe). Functions in the N-end rule pathway of protein degradation where it conjugates Leu, Phe and, less efficiently, Met from aminoacyl-tRNAs to the N-termini of proteins containing an N-terminal arginine or lysine. The sequence is that of Leucyl/phenylalanyl-tRNA--protein transferase from Legionella pneumophila (strain Corby).